A 1475-amino-acid chain; its full sequence is ABC transporter G family member 15 (1475 aa).

Positions 1 to 10 (MDSNENKKNG) are enriched in basic and acidic residues. 2 disordered regions span residues 1 to 40 (MDSN…EEHI) and 75 to 94 (NIKN…GGGA). The span at 17–34 (NIINNNNDNNNNNDNNNN) shows a compositional bias: low complexity. Residues 25–67 (NNNNNDNNNNSTEEHIESVEQSIKEFNNVANELETEFRDYLVE) are a coiled coil. Residues 155-404 (LNVKNWFKKS…FIDMGFECEP (250 aa)) form the ABC transporter 1 domain. The ABC transmembrane type-2 1 domain occupies 507–753 (WGDKFSLISR…FTGERYLEKS (247 aa)). 5 consecutive transmembrane segments (helical) span residues 596–616 (IPII…MFGL), 623–641 (FFIN…NNLY), 653–673 (IGQN…SYII), 680–699 (VWFG…RALM), and 770–790 (ICIV…VLNI). The 246-residue stretch at 842–1087 (FTWQHMYYSV…LTSYFQRHGV (246 aa)) folds into the ABC transporter 2 domain. 879 to 886 (GSSGAGKT) contacts ATP. 6 helical membrane passes run 1180-1200 (GYSY…GWTF), 1216-1236 (FIFN…PQFI), 1256-1276 (FALS…TIFF), 1293-1313 (FFFW…GQAI), 1323-1343 (ALNL…VLVI), and 1449-1469 (FGII…FVFL). Residues 1180-1404 (GYSYGTFIQS…TCSDYAFEFL (225 aa)) enclose the ABC transmembrane type-2 2 domain.

The protein belongs to the ABC transporter superfamily. ABCG family. PDR (TC 3.A.1.205) subfamily.

It localises to the membrane. This Dictyostelium discoideum (Social amoeba) protein is ABC transporter G family member 15 (abcG15).